Consider the following 188-residue polypeptide: dCTP deaminase (188 aa).

Residues 111-116, 135-137, Gln-156, Tyr-170, and Gln-180 contribute to the dCTP site; these read KSTYAR and TLE. Glu-137 serves as the catalytic Proton donor/acceptor.

The protein belongs to the dCTP deaminase family. In terms of assembly, homotrimer.

It catalyses the reaction dCTP + H2O + H(+) = dUTP + NH4(+). Its pathway is pyrimidine metabolism; dUMP biosynthesis; dUMP from dCTP (dUTP route): step 1/2. In terms of biological role, catalyzes the deamination of dCTP to dUTP. This is dCTP deaminase from Pseudomonas putida (strain GB-1).